The chain runs to 314 residues: DNA-directed RNA polymerase subunit alpha (314 aa).

The interval 1–228 (MAQFHYECVE…SLFEPLKDIT (228 aa)) is alpha N-terminal domain (alpha-NTD). Residues 240 to 314 (DPTSQIPIEE…LPQEKVAKAT (75 aa)) form an alpha C-terminal domain (alpha-CTD) region.

It belongs to the RNA polymerase alpha chain family. In cyanobacteria the RNAP catalytic core is composed of 2 alpha, 1 beta, 1 beta', 1 gamma and 1 omega subunit. When a sigma factor is associated with the core the holoenzyme is formed, which can initiate transcription.

It catalyses the reaction RNA(n) + a ribonucleoside 5'-triphosphate = RNA(n+1) + diphosphate. Its function is as follows. DNA-dependent RNA polymerase catalyzes the transcription of DNA into RNA using the four ribonucleoside triphosphates as substrates. The polypeptide is DNA-directed RNA polymerase subunit alpha (Trichodesmium erythraeum (strain IMS101)).